Reading from the N-terminus, the 205-residue chain is Holliday junction branch migration complex subunit RuvA (205 aa).

The tract at residues 1 to 64 (MIGKLRGLID…EDQIKLFGFR (64 aa)) is domain I. The interval 65–143 (SDVEREWFRL…AFANVDPGVV (79 aa)) is domain II. Residues 144–154 (RLSGAIEESRA) are flexible linker. The tract at residues 154-205 (APQPVADAISALINLGYGQPQAAAAIAAASRAAGDKAETAQLIRLGLKELAK) is domain III.

Belongs to the RuvA family. As to quaternary structure, homotetramer. Forms an RuvA(8)-RuvB(12)-Holliday junction (HJ) complex. HJ DNA is sandwiched between 2 RuvA tetramers; dsDNA enters through RuvA and exits via RuvB. An RuvB hexamer assembles on each DNA strand where it exits the tetramer. Each RuvB hexamer is contacted by two RuvA subunits (via domain III) on 2 adjacent RuvB subunits; this complex drives branch migration. In the full resolvosome a probable DNA-RuvA(4)-RuvB(12)-RuvC(2) complex forms which resolves the HJ.

The protein localises to the cytoplasm. In terms of biological role, the RuvA-RuvB-RuvC complex processes Holliday junction (HJ) DNA during genetic recombination and DNA repair, while the RuvA-RuvB complex plays an important role in the rescue of blocked DNA replication forks via replication fork reversal (RFR). RuvA specifically binds to HJ cruciform DNA, conferring on it an open structure. The RuvB hexamer acts as an ATP-dependent pump, pulling dsDNA into and through the RuvAB complex. HJ branch migration allows RuvC to scan DNA until it finds its consensus sequence, where it cleaves and resolves the cruciform DNA. This is Holliday junction branch migration complex subunit RuvA from Bradyrhizobium sp. (strain ORS 278).